Consider the following 396-residue polypeptide: Elongation factor Tu (396 aa).

The region spanning 10-205 (KPHVNIGTIG…AVDESIPDPV (196 aa)) is the tr-type G domain. A G1 region spans residues 19–26 (GHVDHGKT). 19-26 (GHVDHGKT) is a binding site for GTP. Thr26 lines the Mg(2+) pocket. Residues 62 to 66 (GITIN) are G2. Residues 83–86 (DAPG) are G3. Residues 83–87 (DAPGH) and 138–141 (NKSD) contribute to the GTP site. The segment at 138-141 (NKSD) is G4. A G5 region spans residues 175–177 (SAL).

The protein belongs to the TRAFAC class translation factor GTPase superfamily. Classic translation factor GTPase family. EF-Tu/EF-1A subfamily. In terms of assembly, monomer.

The protein localises to the cytoplasm. It catalyses the reaction GTP + H2O = GDP + phosphate + H(+). GTP hydrolase that promotes the GTP-dependent binding of aminoacyl-tRNA to the A-site of ribosomes during protein biosynthesis. The polypeptide is Elongation factor Tu (Mycobacterium marinum (strain ATCC BAA-535 / M)).